Consider the following 62-residue polypeptide: UPF0434 protein RHE_CH03977 (62 aa).

The protein belongs to the UPF0434 family.

In Rhizobium etli (strain ATCC 51251 / DSM 11541 / JCM 21823 / NBRC 15573 / CFN 42), this protein is UPF0434 protein RHE_CH03977.